The sequence spans 218 residues: Thiopurine S-methyltransferase (218 aa).

Residues tryptophan 10, leucine 45, glutamate 66, and arginine 123 each coordinate S-adenosyl-L-methionine.

The protein belongs to the class I-like SAM-binding methyltransferase superfamily. TPMT family.

It is found in the cytoplasm. The catalysed reaction is S-adenosyl-L-methionine + a thiopurine = S-adenosyl-L-homocysteine + a thiopurine S-methylether.. This is Thiopurine S-methyltransferase from Pseudomonas aeruginosa (strain ATCC 15692 / DSM 22644 / CIP 104116 / JCM 14847 / LMG 12228 / 1C / PRS 101 / PAO1).